Reading from the N-terminus, the 166-residue chain is Protein-export protein SecB (166 aa).

Belongs to the SecB family. In terms of assembly, homotetramer, a dimer of dimers. One homotetramer interacts with 1 SecA dimer.

Its subcellular location is the cytoplasm. In terms of biological role, one of the proteins required for the normal export of preproteins out of the cell cytoplasm. It is a molecular chaperone that binds to a subset of precursor proteins, maintaining them in a translocation-competent state. It also specifically binds to its receptor SecA. This Acidiphilium cryptum (strain JF-5) protein is Protein-export protein SecB.